The sequence spans 251 residues: Uroporphyrinogen-III C-methyltransferase (251 aa).

Residues P17, 93 to 95 (GGD), 123 to 124 (TS), M177, and A206 each bind S-adenosyl-L-homocysteine.

It belongs to the precorrin methyltransferase family.

The protein localises to the plastid. Its subcellular location is the chloroplast. The catalysed reaction is uroporphyrinogen III + 2 S-adenosyl-L-methionine = precorrin-2 + 2 S-adenosyl-L-homocysteine + H(+). It functions in the pathway cofactor biosynthesis; adenosylcobalamin biosynthesis; precorrin-2 from uroporphyrinogen III: step 1/1. Its pathway is porphyrin-containing compound metabolism; siroheme biosynthesis; precorrin-2 from uroporphyrinogen III: step 1/1. Functionally, catalyzes the two successive C-2 and C-7 methylation reactions involved in the conversion of uroporphyrinogen III to precorrin-2 via the intermediate formation of precorrin-1. It is a step in the biosynthesis of both cobalamin (vitamin B12) and siroheme. The chain is Uroporphyrinogen-III C-methyltransferase (cobA) from Cyanidium caldarium (Red alga).